We begin with the raw amino-acid sequence, 176 residues long: RNA polymerase sigma factor SigO (176 aa).

Residues 30 to 43 (DARSLDELFKQFYK) carry the Polymerase core binding motif. The H-T-H motif DNA-binding region spans 139 to 158 (MQEIADSLGESRQNISNIHK).

This sequence belongs to the sigma-70 factor family. Interacts with RNA polymerase.

Sigma factors are initiation factors that promote the attachment of RNA polymerase to specific initiation sites and are then released. Together with its coactivator RsoA, positively regulates the expression of at least three operons, including oxdC-yvrL, sigO-rsoA and yvrJ. Required for the acid stress-dependent induction of the oxalate decarboxylase oxdC. The chain is RNA polymerase sigma factor SigO (sigO) from Bacillus subtilis (strain 168).